Consider the following 92-residue polypeptide: Small ribosomal subunit protein uS19c (92 aa).

Belongs to the universal ribosomal protein uS19 family.

It is found in the plastid. The protein resides in the chloroplast. Its function is as follows. Protein S19 forms a complex with S13 that binds strongly to the 16S ribosomal RNA. This is Small ribosomal subunit protein uS19c from Phaseolus angularis (Azuki bean).